The following is a 543-amino-acid chain: Aspartate/alanine antiporter (543 aa).

Transmembrane regions (helical) follow at residues 4-26, 33-55, 88-110, 117-139, 159-178, 362-381, 385-407, 428-450, 455-477, and 520-542; these read IGNFLVGTPVFTIFICLALGYLL, SFTLGATVGVLIVALLIGQLGVF, FGAKIVYATLIFLVSAFIVAYAC, GPGIAAGIIAGGLTQSAVIGSSL, IPIVYTLTYVFGTIGVLIFL, IINYSWFALGIALSAALGIV, VSGVPIALGGGTASLIVGLVQSI, SIGLNLFIATVGLSAAKTFISAI, ISVLLIGAVISILPHIITFVICY, and VAPAYAIGNIFLTLMGPIFIVLL.

This sequence belongs to the AAE transporter (TC 2.A.81) family.

The protein localises to the cell membrane. In terms of biological role, catalyzes the electrogenic exchange of aspartate with alanine. This Tetragenococcus halophilus (Pediococcus halophilus) protein is Aspartate/alanine antiporter (aspT).